Here is a 135-residue protein sequence, read N- to C-terminus: Large ribosomal subunit protein uL16c (135 aa).

Belongs to the universal ribosomal protein uL16 family. Part of the 50S ribosomal subunit.

The protein resides in the plastid. This is Large ribosomal subunit protein uL16c from Epifagus virginiana (Beechdrops).